Consider the following 184-residue polypeptide: MSRIGKLPIKLPQGVTLRGPEEDIVYVKGPKGELSQYIDPAISVTIENDTVTLHRRTNQKRHKALHGLYRVLINNMIIGVSTGFTKSLELVGVGYKASVQGNALDLDLGYSHKIYFVIPPEIKVQAETTKGKNPLVHLEGIDKQLLGQVAAKIKTLRKVEPYKGKGIRYLGEQIRRKAGKTASK.

It belongs to the universal ribosomal protein uL6 family. As to quaternary structure, part of the 50S ribosomal subunit.

In terms of biological role, this protein binds to the 23S rRNA, and is important in its secondary structure. It is located near the subunit interface in the base of the L7/L12 stalk, and near the tRNA binding site of the peptidyltransferase center. This chain is Large ribosomal subunit protein uL6, found in Amoebophilus asiaticus (strain 5a2).